We begin with the raw amino-acid sequence, 250 residues long: Probable aquaporin TIP-type (250 aa).

Transmembrane regions (helical) follow at residues 22 to 42 and 56 to 76; these read AGLA…GSGI and AGLI…VSVG. Positions 85 to 87 match the NPA 1 motif; that stretch reads NPA. Helical transmembrane passes span 104 to 124, 138 to 158, and 170 to 190; these read IVYI…LVFV, VGVG…VYTV, and IGII…LVGG. The NPA 2 signature appears at 198–200; it reads NPA. A helical transmembrane segment spans residues 218–238; that stretch reads YWAGPLIGGGIAGLVYEVLFI.

It belongs to the MIP/aquaporin (TC 1.A.8) family. TIP (TC 1.A.8.10) subfamily.

The protein localises to the membrane. Aquaporins facilitate the transport of water and small neutral solutes across cell membranes. May have a role in buffering osmotic fluctations in the highly compartmented vacuole of arbuscule cells. The polypeptide is Probable aquaporin TIP-type (AQP1) (Medicago truncatula (Barrel medic)).